Reading from the N-terminus, the 292-residue chain is MPQHDQLHRYLFENFAVRGELVTVSETLQQILDNHTYPQPVKTVLAELLVATSLLTATLKFAGDITVQLQGDGPLSLAVINGNNQQQMRGVARVQGDIPDNADLKTLVGNGYLVITITPEEGERYQGVVGLEGDTLAACLEDYFLRSEQLPTRLFIRTGDVDGKPAAGGMLLQVMPAQNAQAEDFDHLAMLTETIKSEELLTLPANDVLWRLYHEEEVTLYDPQDVEFKCTCSRERCAGALKTLPDEEVDSILAEEGEIDMHCDYCGNHYLFNAMDIAEIRNNASPADPQVH.

Intrachain disulfides connect Cys230–Cys232 and Cys263–Cys266.

The protein belongs to the HSP33 family. Under oxidizing conditions two disulfide bonds are formed involving the reactive cysteines. Under reducing conditions zinc is bound to the reactive cysteines and the protein is inactive.

The protein localises to the cytoplasm. Its function is as follows. Redox regulated molecular chaperone. Protects both thermally unfolding and oxidatively damaged proteins from irreversible aggregation. Plays an important role in the bacterial defense system toward oxidative stress. This is 33 kDa chaperonin from Salmonella paratyphi A (strain ATCC 9150 / SARB42).